The chain runs to 435 residues: Glutamate-1-semialdehyde 2,1-aminomutase (435 aa).

Lys266 is subject to N6-(pyridoxal phosphate)lysine.

This sequence belongs to the class-III pyridoxal-phosphate-dependent aminotransferase family. HemL subfamily. Homodimer. It depends on pyridoxal 5'-phosphate as a cofactor.

The protein resides in the cytoplasm. The enzyme catalyses (S)-4-amino-5-oxopentanoate = 5-aminolevulinate. The protein operates within porphyrin-containing compound metabolism; protoporphyrin-IX biosynthesis; 5-aminolevulinate from L-glutamyl-tRNA(Glu): step 2/2. The protein is Glutamate-1-semialdehyde 2,1-aminomutase of Helicobacter hepaticus (strain ATCC 51449 / 3B1).